The primary structure comprises 503 residues: Probable cytosol aminopeptidase (503 aa).

Positions 274 and 279 each coordinate Mn(2+). Residue lysine 286 is part of the active site. Mn(2+)-binding residues include aspartate 297, aspartate 356, and glutamate 358. Residue arginine 360 is part of the active site.

Belongs to the peptidase M17 family. The cofactor is Mn(2+).

It localises to the cytoplasm. The catalysed reaction is Release of an N-terminal amino acid, Xaa-|-Yaa-, in which Xaa is preferably Leu, but may be other amino acids including Pro although not Arg or Lys, and Yaa may be Pro. Amino acid amides and methyl esters are also readily hydrolyzed, but rates on arylamides are exceedingly low.. It carries out the reaction Release of an N-terminal amino acid, preferentially leucine, but not glutamic or aspartic acids.. Its function is as follows. Presumably involved in the processing and regular turnover of intracellular proteins. Catalyzes the removal of unsubstituted N-terminal amino acids from various peptides. The polypeptide is Probable cytosol aminopeptidase (Burkholderia orbicola (strain AU 1054)).